Reading from the N-terminus, the 470-residue chain is Phosphoribosylamine--glycine ligase (470 aa).

The region spanning 115–354 (KDFLKRIGVP…MAEISMAVVE (240 aa)) is the ATP-grasp domain. 142-203 (REKFNNGIVV…EERLRGIEVA (62 aa)) contacts ATP. Residues glutamate 324 and asparagine 326 each contribute to the Mg(2+) site.

It belongs to the GARS family. Requires Mg(2+) as cofactor. Mn(2+) is required as a cofactor.

The catalysed reaction is 5-phospho-beta-D-ribosylamine + glycine + ATP = N(1)-(5-phospho-beta-D-ribosyl)glycinamide + ADP + phosphate + H(+). Its pathway is purine metabolism; IMP biosynthesis via de novo pathway; N(1)-(5-phospho-D-ribosyl)glycinamide from 5-phospho-alpha-D-ribose 1-diphosphate: step 2/2. In Archaeoglobus fulgidus (strain ATCC 49558 / DSM 4304 / JCM 9628 / NBRC 100126 / VC-16), this protein is Phosphoribosylamine--glycine ligase (purD).